Reading from the N-terminus, the 372-residue chain is Chaperone protein DnaJ (372 aa).

In terms of domain architecture, J spans 5 to 70; it reads DYYEVLGVSK…QKRAAYDQYG (66 aa). The CR-type zinc finger occupies 127–205; that stretch reads GVTKEIRIPT…CHGHGRVERY (79 aa). Cysteine 140, cysteine 143, cysteine 157, cysteine 160, cysteine 179, cysteine 182, cysteine 193, and cysteine 196 together coordinate Zn(2+). CXXCXGXG motif repeat units follow at residues 140–147, 157–164, 179–186, and 193–200; these read CDICHGSG, CSTCQGAG, CPHCHGRG, and CHKCHGHG.

It belongs to the DnaJ family. In terms of assembly, homodimer. Requires Zn(2+) as cofactor.

The protein resides in the cytoplasm. In terms of biological role, participates actively in the response to hyperosmotic and heat shock by preventing the aggregation of stress-denatured proteins and by disaggregating proteins, also in an autonomous, DnaK-independent fashion. Unfolded proteins bind initially to DnaJ; upon interaction with the DnaJ-bound protein, DnaK hydrolyzes its bound ATP, resulting in the formation of a stable complex. GrpE releases ADP from DnaK; ATP binding to DnaK triggers the release of the substrate protein, thus completing the reaction cycle. Several rounds of ATP-dependent interactions between DnaJ, DnaK and GrpE are required for fully efficient folding. Also involved, together with DnaK and GrpE, in the DNA replication of plasmids through activation of initiation proteins. The polypeptide is Chaperone protein DnaJ (Photorhabdus laumondii subsp. laumondii (strain DSM 15139 / CIP 105565 / TT01) (Photorhabdus luminescens subsp. laumondii)).